We begin with the raw amino-acid sequence, 152 residues long: Putative pre-16S rRNA nuclease (152 aa).

It belongs to the YqgF nuclease family.

The protein resides in the cytoplasm. In terms of biological role, could be a nuclease involved in processing of the 5'-end of pre-16S rRNA. The protein is Putative pre-16S rRNA nuclease of Nitrosococcus oceani (strain ATCC 19707 / BCRC 17464 / JCM 30415 / NCIMB 11848 / C-107).